Reading from the N-terminus, the 133-residue chain is Small ribosomal subunit protein bS16 (133 aa).

Positions 83-101 (KRDARSNPKKAEPGKKAQE) are enriched in basic and acidic residues. The tract at residues 83–102 (KRDARSNPKKAEPGKKAQER) is disordered.

The protein belongs to the bacterial ribosomal protein bS16 family.

This is Small ribosomal subunit protein bS16 from Mesorhizobium japonicum (strain LMG 29417 / CECT 9101 / MAFF 303099) (Mesorhizobium loti (strain MAFF 303099)).